The sequence spans 484 residues: MARAIMLQGTGSDVGKTVLVAGLCRLAANRGLTVRPFKPQNMSNNAAVADDGGEIGRAQWLQSLAARTPSSVHMNPVLLKPQSENGSQIIVQGRVFGQAKGRDYQRLKPQLLGAVLASFEKVADGADLVIVEGAGSPAEINLRAGDIANMGFATQAGVPVVLVGDIDRGGVIASLVGTHAILADADRAMISGYIINKFRGDVSLFDNGIRAIEGFTGWPCFGVVPWLSGAARLPAEDSVVLERLAKGGGGALKIAVPVLPRIANFDDLDPLRAEPDVELVFIRSGERLPADASLVVLPGSKSTISDLADLRAAGWDRDLFAHVRRGGRVIGICGGYQMLGRTVHDPLGLEGGTLETPGLALLDVETEMAPEKTVRNSHARSTEYDAPLAGYQIHLGMTRGPDCGRPSAIVDGVPDGALSANGLIMGTYLHGLFASDAYRTRLLQSFGLSGERRNYRESVDKALDEIAGELERYLDPRWLAGLVG.

The 188-residue stretch at 251–438 folds into the GATase cobBQ-type domain; it reads ALKIAVPVLP…LHGLFASDAY (188 aa). Cys-333 serves as the catalytic Nucleophile. His-430 is a catalytic residue.

This sequence belongs to the CobB/CobQ family. CobQ subfamily.

It participates in cofactor biosynthesis; adenosylcobalamin biosynthesis. Catalyzes amidations at positions B, D, E, and G on adenosylcobyrinic A,C-diamide. NH(2) groups are provided by glutamine, and one molecule of ATP is hydrogenolyzed for each amidation. The polypeptide is Cobyric acid synthase (Rhizobium etli (strain CIAT 652)).